A 1249-amino-acid polypeptide reads, in one-letter code: Cell adhesion molecule-related/down-regulated by oncogenes (1249 aa).

Positions 1-25 (MHSDPGPWHPLLCFLVLALSTSANS) are cleaved as a signal peptide. Topologically, residues 26 to 957 (DVTPRFTSKP…PSHSPTRNGD (932 aa)) are extracellular. Ig-like C2-type domains are found at residues 29-113 (PRFT…KSVS), 120-212 (NDFE…LKLS), 217-307 (PRVD…VYYT), 314-400 (PSVS…ATVH), and 406-517 (PVIV…AYLT). 3 cysteine pairs are disulfide-bonded: Cys-50-Cys-98, Cys-142-Cys-192, and Cys-244-Cys-292. 5 N-linked (GlcNAc...) asparagine glycosylation sites follow: Asn-181, Asn-289, Asn-296, Asn-344, and Asn-428. Cystine bridges form between Cys-335-Cys-382 and Cys-427-Cys-501. 2 disordered regions span residues 528–585 (EDIT…SPPQ) and 671–690 (TSKERTSSSKNTQAPFPPIG). Residues 545–566 (SETRVPDHSQINEHKPEPRVTE) show a composition bias toward basic and acidic residues. Fibronectin type-III domains are found at residues 577–675 (APII…SKER), 721–815 (APDR…VAGY), and 826–923 (GPRI…TKAR). Asn-870 is a glycosylation site (N-linked (GlcNAc...) asparagine). The interval 929-952 (SEYPVLDLSTPSVPDRSSSPSHSP) is disordered. Over residues 937–952 (STPSVPDRSSSPSHSP) the composition is skewed to low complexity. Residues 958–978 (FLYVIVGCVLGGMVLILLAFI) traverse the membrane as a helical segment. Over 979 to 1249 (AMCLLKNRQQ…DHPQLQTQEA (271 aa)) the chain is Cytoplasmic. The tract at residues 1158-1202 (NCSEEIEEDQNEKETQLSANSVCPEEATQTGTEQHEGEDCTKTED) is disordered. Acidic residues predominate over residues 1159-1168 (CSEEIEEDQN). Over residues 1173–1189 (QLSANSVCPEEATQTGT) the composition is skewed to polar residues. Residues 1190 to 1202 (EQHEGEDCTKTED) are compositionally biased toward basic and acidic residues.

It localises to the cell membrane. Functionally, component of a cell-surface receptor complex that mediates cell-cell interactions between muscle precursor cells. Promotes differentiation of myogenic cells. The polypeptide is Cell adhesion molecule-related/down-regulated by oncogenes (cdon) (Xenopus laevis (African clawed frog)).